We begin with the raw amino-acid sequence, 228 residues long: N-(5'-phosphoribosyl)anthranilate isomerase (228 aa).

It belongs to the TrpF family.

It carries out the reaction N-(5-phospho-beta-D-ribosyl)anthranilate = 1-(2-carboxyphenylamino)-1-deoxy-D-ribulose 5-phosphate. It functions in the pathway amino-acid biosynthesis; L-tryptophan biosynthesis; L-tryptophan from chorismate: step 3/5. This is N-(5'-phosphoribosyl)anthranilate isomerase from Azorhizobium caulinodans (strain ATCC 43989 / DSM 5975 / JCM 20966 / LMG 6465 / NBRC 14845 / NCIMB 13405 / ORS 571).